A 443-amino-acid chain; its full sequence is Sperm-associated antigen 4 protein (443 aa).

Over residues 1–36 the composition is skewed to low complexity; it reads MRRSPRSGSAASSHNHTPNFYSENSNSSHSATSGDS. Residues 1–107 are disordered; that stretch reads MRRSPRSGSA…VRGGASEPSG (107 aa). A run of 2 helical transmembrane segments spans residues 137-157 and 168-188; these read FLSL…DGLV and FLFT…WGLL. Residues 203-244 adopt a coiled-coil conformation; the sequence is TLSQYHHRVHSQGQQLQQLQAELNKLHKEVSSVRAAHSERVA. An SUN domain is found at 267–427; the sequence is GASIDLEKTS…YRVRAHGVRT (161 aa).

Self-associates. Interacts with ODF1. May associate with microtubules. Interacts with SUN3 and SYNE1; suggesting the formation of a spermatogenesis-specific LINC complex; a SUN domain-based heterotrimer of SPAG4 and SUN3 may associate with SYNE1. Interacts with SEPT12 and LMNB1; during spermatogenesis. In terms of tissue distribution, isoform 1 is testis specific and is exclusively expressed in spermatids.

It localises to the membrane. The protein resides in the cytoplasm. The protein localises to the cytoskeleton. Its subcellular location is the nucleus envelope. It is found in the nucleus inner membrane. It localises to the flagellum axoneme. In terms of biological role, involved in spermatogenesis. Required for sperm head formation but not required to establish and maintain general polarity of the sperm head. Required for anchoring and organization of the manchette. Required for targeting of SUN3 and probably SYNE1 through a probable SUN1:SYNE3 LINC complex to the nuclear envelope and involved in accurate posterior sperm head localization of the complex. May anchor SUN3 the nuclear envelope. Involved in maintenance of the nuclear envelope integrity. May assist the organization and assembly of outer dense fibers (ODFs), a specific structure of the sperm tail. The sequence is that of Sperm-associated antigen 4 protein (Spag4) from Mus musculus (Mouse).